The sequence spans 439 residues: GTPase Obg (439 aa).

The Obg domain occupies 5 to 164 (TDFFDQATIV…LTLELELKML (160 aa)). The 171-residue stretch at 165 to 335 (ADVGLVGFPN…LLRRVADLLR (171 aa)) folds into the OBG-type G domain. Residues 171 to 178 (GFPNAGKS), 196 to 200 (FTTLT), 217 to 220 (DIPG), 287 to 290 (NKAD), and 316 to 318 (SAA) each bind GTP. Mg(2+) contacts are provided by serine 178 and threonine 198. The 78-residue stretch at 356 to 433 (LPEVDENAFT…IGRAELVWDD (78 aa)) folds into the OCT domain.

Belongs to the TRAFAC class OBG-HflX-like GTPase superfamily. OBG GTPase family. As to quaternary structure, monomer. Mg(2+) serves as cofactor.

The protein resides in the cytoplasm. Its function is as follows. An essential GTPase which binds GTP, GDP and possibly (p)ppGpp with moderate affinity, with high nucleotide exchange rates and a fairly low GTP hydrolysis rate. Plays a role in control of the cell cycle, stress response, ribosome biogenesis and in those bacteria that undergo differentiation, in morphogenesis control. In Chloroflexus aurantiacus (strain ATCC 29364 / DSM 637 / Y-400-fl), this protein is GTPase Obg.